The primary structure comprises 206 residues: Imidazoleglycerol-phosphate dehydratase (206 aa).

The protein belongs to the imidazoleglycerol-phosphate dehydratase family.

The protein localises to the cytoplasm. The enzyme catalyses D-erythro-1-(imidazol-4-yl)glycerol 3-phosphate = 3-(imidazol-4-yl)-2-oxopropyl phosphate + H2O. It participates in amino-acid biosynthesis; L-histidine biosynthesis; L-histidine from 5-phospho-alpha-D-ribose 1-diphosphate: step 6/9. This chain is Imidazoleglycerol-phosphate dehydratase, found in Mycolicibacterium smegmatis (strain ATCC 700084 / mc(2)155) (Mycobacterium smegmatis).